The primary structure comprises 205 residues: Octanoyltransferase (205 aa).

Positions 30 to 205 (NLSDELVWLL…ILKQEFHKIF (176 aa)) constitute a BPL/LPL catalytic domain. Substrate is bound by residues 68–75 (RGGKYTYH), 140–142 (AFG), and 153–155 (GIA). Catalysis depends on Cys-171, which acts as the Acyl-thioester intermediate.

The protein belongs to the LipB family.

It is found in the cytoplasm. It catalyses the reaction octanoyl-[ACP] + L-lysyl-[protein] = N(6)-octanoyl-L-lysyl-[protein] + holo-[ACP] + H(+). Its pathway is protein modification; protein lipoylation via endogenous pathway; protein N(6)-(lipoyl)lysine from octanoyl-[acyl-carrier-protein]: step 1/2. Catalyzes the transfer of endogenously produced octanoic acid from octanoyl-acyl-carrier-protein onto the lipoyl domains of lipoate-dependent enzymes. Lipoyl-ACP can also act as a substrate although octanoyl-ACP is likely to be the physiological substrate. This chain is Octanoyltransferase, found in Wolbachia pipientis subsp. Culex pipiens (strain wPip).